Consider the following 248-residue polypeptide: uncharacterized protein (248 aa).

In terms of domain architecture, ABC transporter spans 7-246; it reads VQLSNLSWTF…PASTILLPTS (240 aa). 43 to 50 is an ATP binding site; that stretch reads GQSGSGKS.

This sequence belongs to the ABC transporter superfamily.

This is an uncharacterized protein from Mycobacterium tuberculosis (strain CDC 1551 / Oshkosh).